Consider the following 252-residue polypeptide: Pantothenate synthetase (252 aa).

29-36 (MGNLHAGH) serves as a coordination point for ATP. Catalysis depends on histidine 36, which acts as the Proton donor. (R)-pantoate is bound at residue glutamine 60. Glutamine 60 provides a ligand contact to beta-alanine. ATP is bound at residue 146-149 (GEKD). Residue glutamine 152 coordinates (R)-pantoate. Residues valine 175 and 183 to 186 (CSSR) each bind ATP.

This sequence belongs to the pantothenate synthetase family. In terms of assembly, homodimer.

The protein localises to the cytoplasm. It carries out the reaction (R)-pantoate + beta-alanine + ATP = (R)-pantothenate + AMP + diphosphate + H(+). It participates in cofactor biosynthesis; (R)-pantothenate biosynthesis; (R)-pantothenate from (R)-pantoate and beta-alanine: step 1/1. Its function is as follows. Catalyzes the condensation of pantoate with beta-alanine in an ATP-dependent reaction via a pantoyl-adenylate intermediate. The protein is Pantothenate synthetase of Legionella pneumophila (strain Lens).